A 487-amino-acid chain; its full sequence is Betaine aldehyde dehydrogenase (487 aa).

The K(+) site is built by I27 and D93. Residue 149–151 coordinates NAD(+); sequence GAW. Catalysis depends on K161, which acts as the Charge relay system. NAD(+) is bound by residues 175 to 178 and 228 to 231; these read KPSE and SVPT. E249 functions as the Proton acceptor in the catalytic mechanism. Residues G251, C283, and E384 each contribute to the NAD(+) site. C283 acts as the Nucleophile in catalysis. Residue C283 is modified to Cysteine sulfenic acid (-SOH). Residues K454 and G457 each contribute to the K(+) site. E461 functions as the Charge relay system in the catalytic mechanism.

The protein belongs to the aldehyde dehydrogenase family. In terms of assembly, dimer of dimers. K(+) serves as cofactor.

It catalyses the reaction betaine aldehyde + NAD(+) + H2O = glycine betaine + NADH + 2 H(+). It participates in amine and polyamine biosynthesis; betaine biosynthesis via choline pathway; betaine from betaine aldehyde: step 1/1. Its function is as follows. Involved in the biosynthesis of the osmoprotectant glycine betaine. Catalyzes the irreversible oxidation of betaine aldehyde to the corresponding acid. The chain is Betaine aldehyde dehydrogenase from Mesorhizobium japonicum (strain LMG 29417 / CECT 9101 / MAFF 303099) (Mesorhizobium loti (strain MAFF 303099)).